A 481-amino-acid chain; its full sequence is Phospho-2-dehydro-3-deoxyheptonate aldolase (481 aa).

Residues 1–22 are disordered; the sequence is MSQQTTPNAPGWAPDSWRSKPI.

The protein belongs to the class-II DAHP synthase family. Homodimer. In terms of processing, the N-terminus is blocked.

The catalysed reaction is D-erythrose 4-phosphate + phosphoenolpyruvate + H2O = 7-phospho-2-dehydro-3-deoxy-D-arabino-heptonate + phosphate. It participates in metabolic intermediate biosynthesis; chorismate biosynthesis; chorismate from D-erythrose 4-phosphate and phosphoenolpyruvate: step 1/7. This is Phospho-2-dehydro-3-deoxyheptonate aldolase (aro-8) from Neurospora crassa (strain ATCC 24698 / 74-OR23-1A / CBS 708.71 / DSM 1257 / FGSC 987).